The sequence spans 250 residues: ATP synthase subunit a (250 aa).

Helical transmembrane passes span A29 to S49, F84 to M104, I114 to Y134, L143 to I163, V189 to L209, and V216 to L236.

Belongs to the ATPase A chain family. F-type ATPases have 2 components, CF(1) - the catalytic core - and CF(0) - the membrane proton channel. CF(1) has five subunits: alpha(3), beta(3), gamma(1), delta(1), epsilon(1). CF(0) has three main subunits: a(1), b(2) and c(9-12). The alpha and beta chains form an alternating ring which encloses part of the gamma chain. CF(1) is attached to CF(0) by a central stalk formed by the gamma and epsilon chains, while a peripheral stalk is formed by the delta and b chains.

Its subcellular location is the cell inner membrane. Its function is as follows. Key component of the proton channel; it plays a direct role in the translocation of protons across the membrane. This is ATP synthase subunit a from Allorhizobium ampelinum (strain ATCC BAA-846 / DSM 112012 / S4) (Agrobacterium vitis (strain S4)).